Reading from the N-terminus, the 202-residue chain is MTVSETESAVPVDASAYREAMSRLASAVHLITTDGPGGRAGFTASAVCSVSDAPPTLLVCINRAASAYAPLIRNGTLCVNTLGGGHETVAGLFGGRTPMDERFAAGTWRRLRSGAPALTDALVSFDCRIVERHAVGSHDVLYCAVEAVAAAGQADALLYSERRYRTLPRAPRGGSAPAEPARGARAIGARPPEGPVLALRSA.

Over residues 168–191 (PRAPRGGSAPAEPARGARAIGARP) the composition is skewed to low complexity. Positions 168 to 202 (PRAPRGGSAPAEPARGARAIGARPPEGPVLALRSA) are disordered.

This sequence belongs to the non-flavoprotein flavin reductase family. RutF subfamily.

The enzyme catalyses FMNH2 + NAD(+) = FMN + NADH + 2 H(+). In terms of biological role, catalyzes the reduction of FMN to FMNH2 which is used to reduce pyrimidine by RutA via the Rut pathway. The chain is FMN reductase (NADH) RutF from Methylorubrum populi (strain ATCC BAA-705 / NCIMB 13946 / BJ001) (Methylobacterium populi).